The sequence spans 204 residues: Ribosomal RNA small subunit methyltransferase G (204 aa).

Residues Gly-73, Phe-78, and Arg-139 each contribute to the S-adenosyl-L-methionine site.

It belongs to the methyltransferase superfamily. RNA methyltransferase RsmG family.

Its subcellular location is the cytoplasm. The catalysed reaction is guanosine(527) in 16S rRNA + S-adenosyl-L-methionine = N(7)-methylguanosine(527) in 16S rRNA + S-adenosyl-L-homocysteine. Its function is as follows. Specifically methylates the N7 position of guanine in position 527 of 16S rRNA. This is Ribosomal RNA small subunit methyltransferase G from Coxiella burnetii (strain Dugway 5J108-111).